The sequence spans 75 residues: Small ribosomal subunit protein bS16c (75 aa).

Belongs to the bacterial ribosomal protein bS16 family.

The protein resides in the plastid. It localises to the chloroplast. In Cyanidioschyzon merolae (strain NIES-3377 / 10D) (Unicellular red alga), this protein is Small ribosomal subunit protein bS16c.